We begin with the raw amino-acid sequence, 108 residues long: uncharacterized protein (108 aa).

The tract at residues 74-108 (TGSKKRDSKANSRSRPSGTITSRGARIGLQGYKSH) is disordered. The segment covering 84 to 95 (NSRSRPSGTITS) has biased composition (polar residues).

This is an uncharacterized protein from Saccharomyces cerevisiae (strain ATCC 204508 / S288c) (Baker's yeast).